Here is a 578-residue protein sequence, read N- to C-terminus: MAQISKCSSLSAELNESSIISHHHGNLWDDDFIQSLKSSNGAPQYHERAAKLVEEIKNLVVSEMKDCNDDLIRRLQMVDIFECLGIDRHFQHEIQVALDYVYRYWNQLEGIGIGSRDSLIKDFNATALGFRALRLHRYNVSSDVLENFKNENGQFFCSSTVEEKEVRCMLTLFRASEISFPGEKVMDEAKAFTTEYLTKVLTGVDVTDVNQSLLREVKYALEFPWHCSLPRWEARSFIEICGQNDSWLKSIMNKRVLELAKLDFNILQWAHHRELQLLSSWWSQSDIAQQNFYRKRHVEFYLWVVIGTFEPEFSTCRITFAKISTLMTILDDLYDTHGTLEQLKIFTEGVKRWDLSLVDRLPDYIKITFEFFLNTSNELIAEVAKTQERDMSAYIRKTWERYLEAYLQEAEWIAARHVPTFDEYMKNGISSSGMCILNLYSLLLMGQLLPDDVLEQIHSPSKIHELVELTARLVDDSKDFETKKVGGELASGIECYVKDNPECTLEDASNHLNGLLDLTVKELNWEFVRHDSVALCFKKFAFNVARGLRLIYKYRDGFDVSNQEMKTHIFKILIDPLT.

Mg(2+) contacts are provided by D331, D335, and D475. The short motif at 331 to 335 is the DDXXD motif element; sequence DDLYD.

This sequence belongs to the terpene synthase family. Tpsd subfamily. It depends on Mg(2+) as a cofactor. The cofactor is Mn(2+).

The protein localises to the cytoplasm. It catalyses the reaction (2E,6E)-farnesyl diphosphate = longifolene + diphosphate. Its pathway is sesquiterpene biosynthesis. It functions in the pathway terpene metabolism; oleoresin biosynthesis. In terms of biological role, involved in defensive oleoresin formation in conifers in response to insect attack or other injury. Involved in sesquiterpene (C15) olefins biosynthesis. Produces mainly longifolene, but also multiple minor products including alpha-longipinene, alpha-longicyclene, E-beta-farnesene, longiborneol, cyclosativene, beta-longipinene, and 12 other sesquiterpenes when used with farnesyl diphosphate (FPP) as substrate. This is Longifolene synthase (TPS-Lon) from Picea abies (Norway spruce).